Reading from the N-terminus, the 454-residue chain is Protein phosphatase 1F (454 aa).

Polar residues predominate over residues 1–12 (MSSGAPQKSSPM). The disordered stretch occupies residues 1-28 (MSSGAPQKSSPMASGAEETPGFLDTLLQ). Positions 156–413 (LVSIHAIRNT…DNITVMVVFL (258 aa)) constitute a PPM-type phosphatase domain. Positions 198, 199, 360, and 404 each coordinate Mn(2+). Residues 419–454 (LLEGGNQGEGDPQAEGRRQDLPSSLPEPETQAPPRS) form a disordered region. Ser454 carries the post-translational modification Phosphoserine.

The protein belongs to the PP2C family. As to quaternary structure, associates with FEM1B. The cofactor is Mg(2+). Requires Mn(2+) as cofactor.

The enzyme catalyses O-phospho-L-seryl-[protein] + H2O = L-seryl-[protein] + phosphate. It catalyses the reaction O-phospho-L-threonyl-[protein] + H2O = L-threonyl-[protein] + phosphate. Its function is as follows. Dephosphorylates and concomitantly deactivates CaM-kinase II activated upon autophosphorylation, and CaM-kinases IV and I activated upon phosphorylation by CaM-kinase kinase. Promotes apoptosis. This Homo sapiens (Human) protein is Protein phosphatase 1F (PPM1F).